The following is a 58-amino-acid chain: UPF0391 membrane protein Bxeno_A2959 (58 aa).

2 helical membrane passes run 4–24 (WALF…TGVA) and 33–53 (FLFI…FVVT).

Belongs to the UPF0391 family.

The protein localises to the cell membrane. The chain is UPF0391 membrane protein Bxeno_A2959 from Paraburkholderia xenovorans (strain LB400).